The chain runs to 220 residues: Large ribosomal subunit protein uL4 (220 aa).

A disordered region spans residues 45-102; the sequence is AARQGTHKTKTRGEVRGGGRKPFRQKGTGRARQGSIRAPHYTGGGTVHGPVPRDYSQR. Positions 62-73 are enriched in basic residues; sequence GGRKPFRQKGTG.

This sequence belongs to the universal ribosomal protein uL4 family. Part of the 50S ribosomal subunit.

In terms of biological role, one of the primary rRNA binding proteins, this protein initially binds near the 5'-end of the 23S rRNA. It is important during the early stages of 50S assembly. It makes multiple contacts with different domains of the 23S rRNA in the assembled 50S subunit and ribosome. Forms part of the polypeptide exit tunnel. In Corynebacterium aurimucosum (strain ATCC 700975 / DSM 44827 / CIP 107346 / CN-1) (Corynebacterium nigricans), this protein is Large ribosomal subunit protein uL4.